The primary structure comprises 245 residues: Acetylglutamate kinase (245 aa).

Substrate-binding positions include 41–42 (GG), arginine 63, and asparagine 156.

This sequence belongs to the acetylglutamate kinase family. ArgB subfamily.

The protein localises to the cytoplasm. It catalyses the reaction N-acetyl-L-glutamate + ATP = N-acetyl-L-glutamyl 5-phosphate + ADP. Its pathway is amino-acid biosynthesis; L-arginine biosynthesis; N(2)-acetyl-L-ornithine from L-glutamate: step 2/4. In terms of biological role, catalyzes the ATP-dependent phosphorylation of N-acetyl-L-glutamate. The polypeptide is Acetylglutamate kinase (Streptococcus sanguinis (strain SK36)).